A 247-amino-acid polypeptide reads, in one-letter code: Small ribosomal subunit protein uS2 (247 aa).

The protein belongs to the universal ribosomal protein uS2 family.

The polypeptide is Small ribosomal subunit protein uS2 (Halorhodospira halophila (strain DSM 244 / SL1) (Ectothiorhodospira halophila (strain DSM 244 / SL1))).